We begin with the raw amino-acid sequence, 142 residues long: Large ribosomal subunit protein uL13 (142 aa).

The protein belongs to the universal ribosomal protein uL13 family. As to quaternary structure, part of the 50S ribosomal subunit.

In terms of biological role, this protein is one of the early assembly proteins of the 50S ribosomal subunit, although it is not seen to bind rRNA by itself. It is important during the early stages of 50S assembly. The protein is Large ribosomal subunit protein uL13 of Psychrobacter arcticus (strain DSM 17307 / VKM B-2377 / 273-4).